Here is a 335-residue protein sequence, read N- to C-terminus: Tryptophan--tRNA ligase (335 aa).

ATP is bound by residues 13–15 and 21–22; these read QPS and GN. The 'HIGH' region motif lies at 14–22; the sequence is PSGNLTIGN. D136 is an L-tryptophan binding site. ATP contacts are provided by residues 148–150, I187, and 196–200; these read GQD and KMSKS. The 'KMSKS' region signature appears at 196–200; that stretch reads KMSKS.

It belongs to the class-I aminoacyl-tRNA synthetase family. In terms of assembly, homodimer.

It is found in the cytoplasm. It carries out the reaction tRNA(Trp) + L-tryptophan + ATP = L-tryptophyl-tRNA(Trp) + AMP + diphosphate + H(+). Functionally, catalyzes the attachment of tryptophan to tRNA(Trp). The sequence is that of Tryptophan--tRNA ligase from Buchnera aphidicola subsp. Acyrthosiphon pisum (strain APS) (Acyrthosiphon pisum symbiotic bacterium).